Reading from the N-terminus, the 369-residue chain is Cobalt-precorrin-5B C(1)-methyltransferase (369 aa).

Belongs to the CbiD family.

It carries out the reaction Co-precorrin-5B + S-adenosyl-L-methionine = Co-precorrin-6A + S-adenosyl-L-homocysteine. The protein operates within cofactor biosynthesis; adenosylcobalamin biosynthesis; cob(II)yrinate a,c-diamide from sirohydrochlorin (anaerobic route): step 6/10. Functionally, catalyzes the methylation of C-1 in cobalt-precorrin-5B to form cobalt-precorrin-6A. This Prosthecochloris aestuarii (strain DSM 271 / SK 413) protein is Cobalt-precorrin-5B C(1)-methyltransferase.